A 498-amino-acid chain; its full sequence is UDP-N-acetylmuramoyl-L-alanyl-D-glutamate--2,6-diaminopimelate ligase (498 aa).

Position 29 (serine 29) interacts with UDP-N-acetyl-alpha-D-muramoyl-L-alanyl-D-glutamate. 120-126 provides a ligand contact to ATP; that stretch reads GTDGKTS. Residues 162–163, serine 189, glutamine 195, and arginine 197 contribute to the UDP-N-acetyl-alpha-D-muramoyl-L-alanyl-D-glutamate site; that span reads TT. At lysine 229 the chain carries N6-carboxylysine. Meso-2,6-diaminopimelate contacts are provided by residues arginine 392, 416-419, glycine 466, and glutamate 470; that span reads DNPR. The short motif at 416 to 419 is the Meso-diaminopimelate recognition motif element; it reads DNPR.

It belongs to the MurCDEF family. MurE subfamily. Requires Mg(2+) as cofactor. Post-translationally, carboxylation is probably crucial for Mg(2+) binding and, consequently, for the gamma-phosphate positioning of ATP.

It is found in the cytoplasm. It catalyses the reaction UDP-N-acetyl-alpha-D-muramoyl-L-alanyl-D-glutamate + meso-2,6-diaminopimelate + ATP = UDP-N-acetyl-alpha-D-muramoyl-L-alanyl-gamma-D-glutamyl-meso-2,6-diaminopimelate + ADP + phosphate + H(+). It functions in the pathway cell wall biogenesis; peptidoglycan biosynthesis. Functionally, catalyzes the addition of meso-diaminopimelic acid to the nucleotide precursor UDP-N-acetylmuramoyl-L-alanyl-D-glutamate (UMAG) in the biosynthesis of bacterial cell-wall peptidoglycan. The protein is UDP-N-acetylmuramoyl-L-alanyl-D-glutamate--2,6-diaminopimelate ligase of Alkalilimnicola ehrlichii (strain ATCC BAA-1101 / DSM 17681 / MLHE-1).